Here is a 79-residue protein sequence, read N- to C-terminus: Cell division protein ZapB (79 aa).

A coiled-coil region spans residues 3 to 79 (LEVFEKLEAK…QALLGRMEEV (77 aa)). N6-acetyllysine is present on lysine 8. Residues 34–65 (NNSLSQEVQNAQHQREELERENNHLKEQQNGW) form a disordered region. Polar residues predominate over residues 35-45 (NSLSQEVQNAQ). Over residues 46–60 (HQREELERENNHLKE) the composition is skewed to basic and acidic residues.

It belongs to the ZapB family. Homodimer. The ends of the coiled-coil dimer bind to each other, forming polymers. Interacts with FtsZ.

The protein localises to the cytoplasm. Non-essential, abundant cell division factor that is required for proper Z-ring formation. It is recruited early to the divisome by direct interaction with FtsZ, stimulating Z-ring assembly and thereby promoting cell division earlier in the cell cycle. Its recruitment to the Z-ring requires functional FtsA or ZipA. This Shigella boydii serotype 18 (strain CDC 3083-94 / BS512) protein is Cell division protein ZapB.